The primary structure comprises 350 residues: MIRTNFFLKQARRHEVKAKSSKKHRSDDTVDRDHSDKIRDRLNSSENGDEKHRRKEKRSSRGKSYSRSRSRERRHRSRSHDRRKSRSRSREKKRRPRSRSRSRSKHRHRSKSRSKSREKKKRIEKPRRHSRSRSQTPPSPPAFRGRNAAMDAQEALARRLERAKKLQEQREKESAEKQQEIAAVAAAGGGSVINVAALLASGTQVTPQIAMAAQMAALQAKALAQTGISVPSYYNPAAVNPMKFAEQEKKRKMLWQGKKEGDKSQSAEIWEKLNFGNKDQNVKFRKLMGIKHEEEAGTSSVDAESFKTLKQQEEMFRNMDAQYEMARSQTHTQRGMGLGFTSSMRGMDAV.

Disordered regions lie at residues Met-1–Arg-146 and Ser-328–Val-350. The span at Gln-10–His-24 shows a compositional bias: basic residues. Basic and acidic residues predominate over residues Arg-25–Lys-51. Residues His-52 to Ser-132 show a composition bias toward basic residues. Residues Arg-146–Ala-187 adopt a coiled-coil conformation.

Belongs to the RSRC2 family.

The polypeptide is Arginine/serine-rich coiled-coil protein 2 (rsrc2) (Xenopus laevis (African clawed frog)).